The chain runs to 140 residues: Small ribosomal subunit protein uS8c (140 aa).

It belongs to the universal ribosomal protein uS8 family. Part of the 30S ribosomal subunit.

It is found in the plastid. Its subcellular location is the chloroplast. Functionally, one of the primary rRNA binding proteins, it binds directly to 16S rRNA central domain where it helps coordinate assembly of the platform of the 30S subunit. This Euglena gracilis protein is Small ribosomal subunit protein uS8c (rps8).